The primary structure comprises 303 residues: Sulfotransferase 6B1 (303 aa).

3'-phosphoadenylyl sulfate is bound at residue 65–70 (KCGSNW). The Proton acceptor role is filled by His118. Residues Arg140, Ser148, Tyr203, 237–242 (STFQAM), and 259–261 (RKG) contribute to the 3'-phosphoadenylyl sulfate site.

It belongs to the sulfotransferase 1 family.

Its subcellular location is the cytoplasm. It localises to the cytosol. The enzyme catalyses thyroxine + 3'-phosphoadenylyl sulfate = thyroxine sulfate + adenosine 3',5'-bisphosphate + H(+). Functionally, sulfotransferase that utilizes 3'-phospho-5'-adenylyl sulfate (PAPS) as sulfonate donor to catalyze the sulfate conjugation of thyroxine. Involved in the metabolism of thyroxine. The chain is Sulfotransferase 6B1 (SULT6B1) from Pan troglodytes (Chimpanzee).